A 131-amino-acid chain; its full sequence is Large ribosomal subunit protein bL17 (131 aa).

This sequence belongs to the bacterial ribosomal protein bL17 family. Part of the 50S ribosomal subunit. Contacts protein L32.

This Oenococcus oeni (strain ATCC BAA-331 / PSU-1) protein is Large ribosomal subunit protein bL17.